Reading from the N-terminus, the 571-residue chain is Glutamate--tRNA ligase (571 aa).

The short motif at 114–124 (PNPNGPWHVGH) is the 'HIGH' region element. The segment at 431-453 (KPLAGGPESASPPLHPNDEDRGR) is disordered.

The protein belongs to the class-I aminoacyl-tRNA synthetase family. Glutamate--tRNA ligase type 2 subfamily.

The protein resides in the cytoplasm. It catalyses the reaction tRNA(Glu) + L-glutamate + ATP = L-glutamyl-tRNA(Glu) + AMP + diphosphate. Its function is as follows. Catalyzes the attachment of glutamate to tRNA(Glu) in a two-step reaction: glutamate is first activated by ATP to form Glu-AMP and then transferred to the acceptor end of tRNA(Glu). In Natronomonas pharaonis (strain ATCC 35678 / DSM 2160 / CIP 103997 / JCM 8858 / NBRC 14720 / NCIMB 2260 / Gabara) (Halobacterium pharaonis), this protein is Glutamate--tRNA ligase.